The chain runs to 240 residues: ATP synthase subunit a (240 aa).

5 consecutive transmembrane segments (helical) span residues 21-41 (LSNL…CVWG), 78-98 (IFLP…LIGV), 116-136 (DAVM…YYGI), 183-203 (ILLS…FGAA), and 212-232 (FSVF…MVYM).

The protein belongs to the ATPase A chain family. In terms of assembly, F-type ATPases have 2 components, CF(1) - the catalytic core - and CF(0) - the membrane proton channel. CF(1) has five subunits: alpha(3), beta(3), gamma(1), delta(1), epsilon(1). CF(0) has three main subunits: a(1), b(2) and c(9-12). The alpha and beta chains form an alternating ring which encloses part of the gamma chain. CF(1) is attached to CF(0) by a central stalk formed by the gamma and epsilon chains, while a peripheral stalk is formed by the delta and b chains.

It localises to the cell membrane. In terms of biological role, key component of the proton channel; it plays a direct role in the translocation of protons across the membrane. This Oceanobacillus iheyensis (strain DSM 14371 / CIP 107618 / JCM 11309 / KCTC 3954 / HTE831) protein is ATP synthase subunit a.